Consider the following 107-residue polypeptide: Multidrug resistance protein mmr (107 aa).

The next 4 membrane-spanning stretches (helical) occupy residues 2-19, 29-51, 58-80, and 84-106; these read TYLF…ATSL, LWPT…VSIS, VAYA…LFLG, and SVTK…LTGA.

Belongs to the drug/metabolite transporter (DMT) superfamily. Small multidrug resistance (SMR) (TC 2.A.7.1) family. Mmr subfamily.

The protein localises to the cell membrane. Functionally, multidrug efflux pump. Confers resistance to tetraphenylphosphonium (TPP), erythromycin, ethidium bromide, acriflavine, safranin O and pyronin Y. In Mycolicibacterium paratuberculosis (strain ATCC BAA-968 / K-10) (Mycobacterium paratuberculosis), this protein is Multidrug resistance protein mmr (mmr).